We begin with the raw amino-acid sequence, 392 residues long: MTLLGTALRPAATRVMLLGAGELGKEVAIECQRLGIEVIAVDRYPDAPAMHVAHRSHVINMLDSEALRHVITEEKPHYIVPEIEAIATDTLRELEGEGLNVVPCARATQLTMNREGIRRLAAEELGLPTSTYRFADSEASFHDAVAAVGFPCIVKPVMSSSGKGQSFIRSAEQLAQAWEYAQQGGRAGAGRVIVEGVVKFDFEITLLTVSAVDGVHFCAPVGHRQQDGDYRESWQPQQMSELALKRAQEIARHVVLALGGHGLFGVELFVCGDEVIFSEVSPRPHDTGMVTLISQDLSEFALHVRAFLGMPVGAIRQYGPAASAVILPQLTSQNVTFDNVHAAVGAGVQVRLFGKPEIDGTRRLGVALATGENVEEAVIRAKKAASRVTVKG.

N(1)-(5-phospho-beta-D-ribosyl)glycinamide-binding positions include 22 to 23 (EL) and E82. ATP-binding positions include R114, K155, 160–165 (SSGKGQ), 195–198 (EGVV), and E203. The ATP-grasp domain maps to 119–308 (RLAAEELGLP…EFALHVRAFL (190 aa)). Mg(2+) is bound by residues E267 and E279. Residues D286, K355, and 362 to 363 (RR) each bind N(1)-(5-phospho-beta-D-ribosyl)glycinamide.

It belongs to the PurK/PurT family. Homodimer.

It catalyses the reaction N(1)-(5-phospho-beta-D-ribosyl)glycinamide + formate + ATP = N(2)-formyl-N(1)-(5-phospho-beta-D-ribosyl)glycinamide + ADP + phosphate + H(+). It functions in the pathway purine metabolism; IMP biosynthesis via de novo pathway; N(2)-formyl-N(1)-(5-phospho-D-ribosyl)glycinamide from N(1)-(5-phospho-D-ribosyl)glycinamide (formate route): step 1/1. In terms of biological role, involved in the de novo purine biosynthesis. Catalyzes the transfer of formate to 5-phospho-ribosyl-glycinamide (GAR), producing 5-phospho-ribosyl-N-formylglycinamide (FGAR). Formate is provided by PurU via hydrolysis of 10-formyl-tetrahydrofolate. The sequence is that of Formate-dependent phosphoribosylglycinamide formyltransferase from Salmonella schwarzengrund (strain CVM19633).